The primary structure comprises 706 residues: Ribosomal RNA large subunit methyltransferase K/L (706 aa).

One can recognise a THUMP domain in the interval 43–154; sequence LMYQSLLWSR…RDMASVALDL (112 aa).

The protein belongs to the methyltransferase superfamily. RlmKL family.

It is found in the cytoplasm. The enzyme catalyses guanosine(2445) in 23S rRNA + S-adenosyl-L-methionine = N(2)-methylguanosine(2445) in 23S rRNA + S-adenosyl-L-homocysteine + H(+). It carries out the reaction guanosine(2069) in 23S rRNA + S-adenosyl-L-methionine = N(2)-methylguanosine(2069) in 23S rRNA + S-adenosyl-L-homocysteine + H(+). Its function is as follows. Specifically methylates the guanine in position 2445 (m2G2445) and the guanine in position 2069 (m7G2069) of 23S rRNA. This chain is Ribosomal RNA large subunit methyltransferase K/L, found in Yersinia pseudotuberculosis serotype O:1b (strain IP 31758).